The sequence spans 288 residues: Rhythmically expressed gene 5 protein (288 aa).

In terms of tissue distribution, expressed in head, but not in the body. Expression levels oscillate with the circadian rhythm.

Its function is as follows. Involved in the generation of biological rhythms (Potential). In the head, oscillates in abundance with a daily peak during early night, even under constant darkness. Oscillation is dependent on period (per) function. The chain is Rhythmically expressed gene 5 protein (Reg-5) from Drosophila melanogaster (Fruit fly).